A 403-amino-acid chain; its full sequence is Large ribosomal subunit protein uL3 (403 aa).

The segment at methionine 1–serine 38 is disordered. Serine 13 is modified (phosphoserine). Basic residues predominate over residues proline 18 to serine 31. Residue lysine 39 forms a Glycyl lysine isopeptide (Lys-Gly) (interchain with G-Cter in SUMO2) linkage. Lysine 136 is subject to N6-acetyllysine. Glycyl lysine isopeptide (Lys-Gly) (interchain with G-Cter in SUMO2) cross-links involve residues lysine 224 and lysine 226. At histidine 245 the chain carries Tele-methylhistidine. Residues lysine 286 and lysine 294 each carry the N6-acetyllysine; alternate modification. A Glycyl lysine isopeptide (Lys-Gly) (interchain with G-Cter in SUMO2); alternate cross-link involves residue lysine 286. Residue lysine 294 forms a Glycyl lysine isopeptide (Lys-Gly) (interchain with G-Cter in SUMO1); alternate linkage. Serine 304 is subject to Phosphoserine. Lysine 366 is modified (N6-acetyllysine; alternate). Lysine 366 is covalently cross-linked (Glycyl lysine isopeptide (Lys-Gly) (interchain with G-Cter in SUMO2); alternate). An N6-acetyllysine modification is found at lysine 373. Glycyl lysine isopeptide (Lys-Gly) (interchain with G-Cter in SUMO2) cross-links involve residues lysine 386, lysine 393, and lysine 399.

Belongs to the universal ribosomal protein uL3 family. As to quaternary structure, component of the large ribosomal subunit. Interacts with DHX33. Post-translationally, constitutively monomethylated at His-245 by METTL18. Methylation at His-245 regulates translation elongation by slowing ribosome traversal on tyrosine codons: slower elongation provides enough time for proper folding of synthesized proteins and prevents cellular aggregation of tyrosine-rich proteins It is not required for incorporation of RPL3 into ribosomes.

Its subcellular location is the nucleus. It localises to the nucleolus. The protein localises to the cytoplasm. Functionally, component of the large ribosomal subunit. The ribosome is a large ribonucleoprotein complex responsible for the synthesis of proteins in the cell. In Bos taurus (Bovine), this protein is Large ribosomal subunit protein uL3 (RPL3).